We begin with the raw amino-acid sequence, 650 residues long: Protein kinase domain-containing protein ppk38 (650 aa).

Residues 33–315 form the Protein kinase domain; sequence VTVKRYLAEG…MRNVPIHIYD (283 aa). Disordered regions lie at residues 344–442, 517–571, and 591–616; these read IHQS…PTTP, KVAA…PTNM, and RRVS…EKPM. Composition is skewed to polar residues over residues 369–415 and 533–554; these read NVNS…NFRV and SVEN…SSNA.

This is Protein kinase domain-containing protein ppk38 (ppk38) from Schizosaccharomyces pombe (strain 972 / ATCC 24843) (Fission yeast).